The following is a 188-amino-acid chain: MTDTLFGFNKSNVVLAAGVAGAAFLGYCIYFDHKRINAPDYKDKIRQKRRAQAGSGGMAARRPPAGGNEMAPDVTDPSQMQRFFLQEVQLGEELMAAGNVEEGAVHIANAVMLCGESQQLLSIFQQTLSEEQFRAVVQQLPSTRERLADMFGARADEAENEPPLVQYLGDGPPPAQIQELIDDTDDLE.

Over 1-12 (MTDTLFGFNKSN) the chain is Mitochondrial intermembrane. A helical membrane pass occupies residues 13-31 (VVLAAGVAGAAFLGYCIYF). At 32-188 (DHKRINAPDY…ELIDDTDDLE (157 aa)) the chain is on the cytoplasmic side. Disordered stretches follow at residues 48-67 (KRRAQAGSGGMAARRPPAGG) and 155-188 (ADEAENEPPLVQYLGDGPPPAQIQELIDDTDDLE). Low complexity predominate over residues 58–67 (MAARRPPAGG).

It belongs to the Tom20 family. As to quaternary structure, forms part of the preprotein translocase complex of the outer mitochondrial membrane (TOM complex).

The protein localises to the mitochondrion outer membrane. In terms of biological role, central component of the receptor complex responsible for the recognition and translocation of cytosolically synthesized mitochondrial preproteins. Together with TOM22 functions as the transit peptide receptor at the surface of the mitochondrion outer membrane and facilitates the movement of preproteins into the translocation pore. The protein is Mitochondrial import receptor subunit TOM20 homolog (tomm-20) of Caenorhabditis briggsae.